A 201-amino-acid polypeptide reads, in one-letter code: Snake venom metalloproteinase trimerelysin-2 (201 aa).

Q1 carries the pyrrolidone carboxylic acid modification. Positions 6 to 201 constitute a Peptidase M12B domain; that stretch reads RYIELAIVVD…YNPQCILNAP (196 aa). Residue N72 is glycosylated (N-linked (GlcNAc...) asparagine). Disulfide bonds link C117–C196, C158–C180, and C160–C163. H142 contacts Zn(2+). The active site involves E143. H146 and H152 together coordinate Zn(2+).

It belongs to the venom metalloproteinase (M12B) family. P-I subfamily. In terms of assembly, monomer. It depends on Zn(2+) as a cofactor. As to expression, expressed by the venom gland.

The protein localises to the secreted. It catalyses the reaction Cleavage of 3-Asn-|-Gln-4, 10-His-|-Leu-11 and 14-Ala-|-Leu-15 in the insulin B chain, and the bond Z-Gly-Pro-|-Leu-Gly-Pro in a small molecule substrate of microbial collagenase.. In terms of biological role, major venom non-hemorrhagic metalloproteinase. The polypeptide is Snake venom metalloproteinase trimerelysin-2 (Protobothrops flavoviridis (Habu)).